The sequence spans 381 residues: Gustatory and pheromone receptor 39a, isoform D (381 aa).

The Cytoplasmic portion of the chain corresponds to 1–43; that stretch reads MKRNAFEELRVQLRTLKWLGVLRFTIDFNKCLVRENASEERSA. The helical transmembrane segment at 44–64 threads the bilayer; sequence WLYLIGVVGITCSLIVYSTYF. The Extracellular segment spans residues 65–78; sequence PSHFIMGKHNTTGN. Asn-74 carries N-linked (GlcNAc...) asparagine glycosylation. Residues 79 to 101 form a helical membrane-spanning segment; that stretch reads CYALINIRSCSIVTMLIYTQLYI. The Cytoplasmic segment spans residues 102–128; the sequence is QRFRFVALLQSILRFNQISGSHREEGR. A helical membrane pass occupies residues 129–149; that stretch reads FAFYYYTHLSLLIICMLNYAY. Residues 150–172 are Extracellular-facing; sequence GYWTAGVRLTTIPIYLLQYGFSY. Residues 173–193 form a helical membrane-spanning segment; it reads LFLGQVVVLFACIQQILLSIL. The Cytoplasmic portion of the chain corresponds to 194 to 234; sequence KYYNQVVLKNIKSSKESREFYYNFCKYNQVIWLSYTEINHC. The chain crosses the membrane as a helical span at residues 235–255; it reads FGLLLLLVTGLILLITPSGPF. Over 256 to 273 the chain is Extracellular; sequence YLVSTIFEGRFRQNWQFS. A helical membrane pass occupies residues 274-294; it reads LMSFTAILWSLPWIVLLVLAM. The Cytoplasmic segment spans residues 295 to 350; that stretch reads GRNDVQKEANKTAKMLTKVPRTGTGLDRMIEKFLLKNLRQKPILTAYGFFALDKST. A helical membrane pass occupies residues 351–371; sequence LFKLFTAIFTYMVILVQFKEM. The Extracellular portion of the chain corresponds to 372–381; that stretch reads ENSTKSINKF. Asn-373 is a glycosylation site (N-linked (GlcNAc...) asparagine).

Belongs to the insect chemoreceptor superfamily. Gustatory receptor (GR) family. Gr21a subfamily. In terms of tissue distribution, expressed in the adult labellar chemosensory neurons and adult thorax and abdomen.

The protein resides in the cell membrane. Functionally, gustatory receptor which mediates acceptance or avoidance behavior, depending on its substrates. Plays a role in sustaining courtship behavior in males, possibly through the reception of a stimulating arrestant pheromone. The polypeptide is Gustatory and pheromone receptor 39a, isoform D (Gr39a) (Drosophila melanogaster (Fruit fly)).